The chain runs to 145 residues: Bacilliredoxin MW1318 (145 aa).

Belongs to the bacilliredoxin family.

The polypeptide is Bacilliredoxin MW1318 (Staphylococcus aureus (strain MW2)).